The following is a 337-amino-acid chain: Putative long-chain-alcohol O-fatty-acyltransferase 10 (337 aa).

8 helical membrane passes run 7–27 (SFVK…YIPS), 38–58 (SVLP…FTIF), 59–79 (SSTT…LFAF), 82–102 (GPLL…CLPI), 142–162 (ILLL…LLTI), 228–248 (MGCM…YFYI), 254–274 (TLEV…EIAV), and 285–305 (MLLR…LFFG).

This sequence belongs to the wax synthase family.

It is found in the membrane. It catalyses the reaction a long chain fatty alcohol + a fatty acyl-CoA = a wax ester + CoA. In terms of biological role, catalyzes the final step in the synthesis of long-chain linear esters (waxes). This is Putative long-chain-alcohol O-fatty-acyltransferase 10 from Arabidopsis thaliana (Mouse-ear cress).